The following is a 323-amino-acid chain: MACLKGAKGTVQDAPDFNDKEDAETLRHAMKGLGTDEDTILKLLISRSNKQRQQIALTYKTLFGRDLTDDLKSELSGKFETLLVALMVPAHLYDACELRNAIKGLGTLENVIIEIMASRTAAEVKNIKETYKKEFDSDLEKDIVGDTSGNFERLLVSLVQANRDPVGKVDEGQVENDAKALFDAGENKWGTDEETFISILSTRGVGHLRKVFDQYMTISGYQIEESIQSETGGHFEKLLLAVVKSIRSIQGYLAEVLYNSMKGAGTDDQTLIRVLVSRSEIDLFNIRQTFRKHYGKSLHAMIQSDTSGDYRNALLLLCGEIDD.

Annexin repeat units lie at residues 17 to 88, 89 to 160, 172 to 244, and 248 to 319; these read FNDK…ALMV, PAHL…SLVQ, GQVE…AVVK, and SIQG…LLCG.

It belongs to the annexin family.

Functionally, calcium/phospholipid-binding protein which promotes membrane fusion and is involved in exocytosis. This Cynops pyrrhogaster (Japanese fire-bellied newt) protein is Annexin A5.